Reading from the N-terminus, the 281-residue chain is NADPH-dependent 7-cyano-7-deazaguanine reductase (281 aa).

Residue 81-83 (IES) coordinates substrate. 83 to 84 (SK) is a binding site for NADPH. Cys-188 functions as the Thioimide intermediate in the catalytic mechanism. The Proton donor role is filled by Asp-195. 227–228 (HE) contacts substrate. 256–257 (RG) lines the NADPH pocket.

The protein belongs to the GTP cyclohydrolase I family. QueF type 2 subfamily. In terms of assembly, homodimer.

Its subcellular location is the cytoplasm. The catalysed reaction is 7-aminomethyl-7-carbaguanine + 2 NADP(+) = 7-cyano-7-deazaguanine + 2 NADPH + 3 H(+). The protein operates within tRNA modification; tRNA-queuosine biosynthesis. Functionally, catalyzes the NADPH-dependent reduction of 7-cyano-7-deazaguanine (preQ0) to 7-aminomethyl-7-deazaguanine (preQ1). The chain is NADPH-dependent 7-cyano-7-deazaguanine reductase from Paracidovorax citrulli (strain AAC00-1) (Acidovorax citrulli).